Here is a 310-residue protein sequence, read N- to C-terminus: MVLIKEREMEIPVIDFAELDGEKRSKTMSLLDHACDKWGFFMVDNHGIDKELMEKVKKMINSHYEEHLKEKFYQSEMVKALSEGKTSDADWESSFFISHKPTSNICQIPNISEELSKTMDEYVCQLHKFAERLSKLMCENLGLDQEDIMNAFSGPKGPAFGTKVAKYPECPRPELMRGLREHTDAGGIILLLQDDQVPGLEFFKDGKWVPIPPSKNNTIFVNTGDQLEILSNGRYKSVVHRVMTVKHGSRLSIATFYNPAGDAIISPAPKLLYPSGYRFQDYLKLYSTTKFGDKGPRLETMKKMGNADSA.

The stretch at 113–133 (EELSKTMDEYVCQLHKFAERL) forms a coiled coil. Positions 158-259 (PAFGTKVAKY…RLSIATFYNP (102 aa)) constitute a Fe2OG dioxygenase domain. The Fe cation site is built by His182, Asp184, and His240. Arg250 contacts 2-oxoglutarate.

It belongs to the iron/ascorbate-dependent oxidoreductase family. Fe(2+) serves as cofactor.

It carries out the reaction 1-aminocyclopropane-1-carboxylate + L-ascorbate + O2 = ethene + L-dehydroascorbate + hydrogen cyanide + CO2 + 2 H2O. It participates in alkene biosynthesis; ethylene biosynthesis via S-adenosyl-L-methionine; ethylene from S-adenosyl-L-methionine: step 2/2. Functionally, enzyme involved in the ethylene biosynthesis. May promote stem elongation by maximizing the extensibility cells, possibly by activating ethylene biosynthesis, in response to very-long-chain fatty acids (VLCFAs C20:0 to C30:0). The chain is 1-aminocyclopropane-1-carboxylate oxidase 1 (ACO1) from Arabidopsis thaliana (Mouse-ear cress).